Reading from the N-terminus, the 142-residue chain is MAAMTVQLDIVSAESSIFSGRVASLQVTGSEGELGIMHGHAPLLSYIKPGMARIVKQDGSEEVFYLSGGLLEVQPSSVSVLADVVMRAKDIDEQAALEAKRRAEAHMATAGADFNYDAAMVELAKAMAQLRVVETIKKNIAR.

The protein belongs to the ATPase epsilon chain family. As to quaternary structure, F-type ATPases have 2 components, CF(1) - the catalytic core - and CF(0) - the membrane proton channel. CF(1) has five subunits: alpha(3), beta(3), gamma(1), delta(1), epsilon(1). CF(0) has three main subunits: a, b and c.

The protein resides in the cell inner membrane. Its function is as follows. Produces ATP from ADP in the presence of a proton gradient across the membrane. The protein is ATP synthase epsilon chain of Shewanella sp. (strain ANA-3).